The primary structure comprises 537 residues: Probable sterol O-acyltransferase 1 (537 aa).

4 helical membrane-spanning segments follow: residues 98–118 (FRGF…QLYA), 140–160 (FFVL…SYGL), 174–194 (LGYT…VYWV), and 199–219 (FPIV…MKQF). An N-linked (GlcNAc...) asparagine glycan is attached at asparagine 250. Transmembrane regions (helical) follow at residues 344 to 364 (FGLL…SAVA) and 384 to 404 (IMFP…DCIL). The FYXDWWN motif motif lies at 418–424 (FYGAWWN). A run of 2 helical transmembrane segments spans residues 462–482 (AVLL…LLAT) and 517–537 (VFFW…YIVF). Residue histidine 474 is part of the active site.

It belongs to the membrane-bound acyltransferase family. Sterol o-acyltransferase subfamily.

It localises to the endoplasmic reticulum membrane. Functionally, sterol O-acyltransferase that catalyzes the formation of stery esters. This is Probable sterol O-acyltransferase 1 (are1) from Schizosaccharomyces pombe (strain 972 / ATCC 24843) (Fission yeast).